Reading from the N-terminus, the 197-residue chain is Holliday junction branch migration complex subunit RuvA (197 aa).

The segment at 1–64 is domain I; that stretch reads MIGRLSGKLI…EDAHLLYGFA (64 aa). Residues 65 to 143 are domain II; the sequence is SKEERQTFRQ…TGGNLTVPGG (79 aa). Residues 143-147 are flexible linker; the sequence is GLPFA. Positions 148–197 are domain III; sequence ATPDEKSDIVNALLALGYNEKEAAAATKSLPADVTVSEGVRLALKSLMKV.

Belongs to the RuvA family. As to quaternary structure, homotetramer. Forms an RuvA(8)-RuvB(12)-Holliday junction (HJ) complex. HJ DNA is sandwiched between 2 RuvA tetramers; dsDNA enters through RuvA and exits via RuvB. An RuvB hexamer assembles on each DNA strand where it exits the tetramer. Each RuvB hexamer is contacted by two RuvA subunits (via domain III) on 2 adjacent RuvB subunits; this complex drives branch migration. In the full resolvosome a probable DNA-RuvA(4)-RuvB(12)-RuvC(2) complex forms which resolves the HJ.

Its subcellular location is the cytoplasm. In terms of biological role, the RuvA-RuvB-RuvC complex processes Holliday junction (HJ) DNA during genetic recombination and DNA repair, while the RuvA-RuvB complex plays an important role in the rescue of blocked DNA replication forks via replication fork reversal (RFR). RuvA specifically binds to HJ cruciform DNA, conferring on it an open structure. The RuvB hexamer acts as an ATP-dependent pump, pulling dsDNA into and through the RuvAB complex. HJ branch migration allows RuvC to scan DNA until it finds its consensus sequence, where it cleaves and resolves the cruciform DNA. The polypeptide is Holliday junction branch migration complex subunit RuvA (Chromobacterium violaceum (strain ATCC 12472 / DSM 30191 / JCM 1249 / CCUG 213 / NBRC 12614 / NCIMB 9131 / NCTC 9757 / MK)).